Here is a 614-residue protein sequence, read N- to C-terminus: Threonine--tRNA ligase (614 aa).

Residues 1–141 (MRLLLIHSDY…LSKTIVPGEE (141 aa)) form an editing domain region. The tract at residues 198 to 490 (AHVDLMRSKE…ISTQKVPALP (293 aa)) is catalytic. The Zn(2+) site is built by Cys290, His342, and His463.

Belongs to the class-II aminoacyl-tRNA synthetase family. In terms of assembly, homodimer. Zn(2+) is required as a cofactor.

It is found in the cytoplasm. It catalyses the reaction tRNA(Thr) + L-threonine + ATP = L-threonyl-tRNA(Thr) + AMP + diphosphate + H(+). Catalyzes the attachment of threonine to tRNA(Thr) in a two-step reaction: L-threonine is first activated by ATP to form Thr-AMP and then transferred to the acceptor end of tRNA(Thr). Also edits incorrectly charged L-seryl-tRNA(Thr). This is Threonine--tRNA ligase from Methanoregula boonei (strain DSM 21154 / JCM 14090 / 6A8).